Here is a 177-residue protein sequence, read N- to C-terminus: Large ribosomal subunit protein uL6 (177 aa).

It belongs to the universal ribosomal protein uL6 family. As to quaternary structure, part of the 50S ribosomal subunit.

Its function is as follows. This protein binds to the 23S rRNA, and is important in its secondary structure. It is located near the subunit interface in the base of the L7/L12 stalk, and near the tRNA binding site of the peptidyltransferase center. This is Large ribosomal subunit protein uL6 from Magnetococcus marinus (strain ATCC BAA-1437 / JCM 17883 / MC-1).